We begin with the raw amino-acid sequence, 449 residues long: Type 3 secretion system ATPase (449 aa).

An ATP-binding site is contributed by 178-183; the sequence is GCGKTT.

It belongs to the ATPase alpha/beta chains family. T3SS ATPase subfamily. As to quaternary structure, the core secretion machinery of the T3SS is composed of approximately 20 different proteins, including cytoplasmic components, a base, an export apparatus and a needle. This subunit is part of the cytosolic complex. Forms homododecamers.

It is found in the cytoplasm. It carries out the reaction ATP + H2O + cellular proteinSide 1 = ADP + phosphate + cellular proteinSide 2.. In terms of biological role, ATPase component of the type III secretion system (T3SS), also called injectisome, which is used to inject bacterial effector proteins into eukaryotic host cells. Acts as a molecular motor to provide the energy that is required for the export of proteins. Required for type III secretion apparatus (T3SA) formation, proper protein secretion, host cell invasion and virulence. May play a critical role in T3SS substrate recognition, disassembly of the effector/chaperone complex and unfolding of the effector in an ATP-dependent manner prior to secretion. The chain is Type 3 secretion system ATPase from Pseudomonas syringae pv. tomato (strain ATCC BAA-871 / DC3000).